The following is a 420-amino-acid chain: Tryptophan synthase beta chain (420 aa).

The residue at position 99 (Lys-99) is an N6-(pyridoxal phosphate)lysine.

This sequence belongs to the TrpB family. As to quaternary structure, tetramer of two alpha and two beta chains. Pyridoxal 5'-phosphate serves as cofactor.

It carries out the reaction (1S,2R)-1-C-(indol-3-yl)glycerol 3-phosphate + L-serine = D-glyceraldehyde 3-phosphate + L-tryptophan + H2O. It participates in amino-acid biosynthesis; L-tryptophan biosynthesis; L-tryptophan from chorismate: step 5/5. In terms of biological role, the beta subunit is responsible for the synthesis of L-tryptophan from indole and L-serine. The sequence is that of Tryptophan synthase beta chain from Helicobacter hepaticus (strain ATCC 51449 / 3B1).